Here is a 219-residue protein sequence, read N- to C-terminus: Elongation factor Ts (219 aa).

The involved in Mg(2+) ion dislocation from EF-Tu stretch occupies residues 82–85; sequence TDFV.

Belongs to the EF-Ts family.

It is found in the cytoplasm. In terms of biological role, associates with the EF-Tu.GDP complex and induces the exchange of GDP to GTP. It remains bound to the aminoacyl-tRNA.EF-Tu.GTP complex up to the GTP hydrolysis stage on the ribosome. This chain is Elongation factor Ts, found in Anaeromyxobacter dehalogenans (strain 2CP-1 / ATCC BAA-258).